The primary structure comprises 413 residues: Phosphopentomutase (413 aa).

The Mn(2+) site is built by Asp11, Asp306, His311, Asp347, His348, and His359.

This sequence belongs to the phosphopentomutase family. The cofactor is Mn(2+).

The protein localises to the cytoplasm. The enzyme catalyses 2-deoxy-alpha-D-ribose 1-phosphate = 2-deoxy-D-ribose 5-phosphate. The catalysed reaction is alpha-D-ribose 1-phosphate = D-ribose 5-phosphate. It functions in the pathway carbohydrate degradation; 2-deoxy-D-ribose 1-phosphate degradation; D-glyceraldehyde 3-phosphate and acetaldehyde from 2-deoxy-alpha-D-ribose 1-phosphate: step 1/2. Isomerase that catalyzes the conversion of deoxy-ribose 1-phosphate (dRib-1-P) and ribose 1-phosphate (Rib-1-P) to deoxy-ribose 5-phosphate (dRib-5-P) and ribose 5-phosphate (Rib-5-P), respectively. The chain is Phosphopentomutase from Helicobacter pylori (strain HPAG1).